Here is a 324-residue protein sequence, read N- to C-terminus: o-succinylbenzoate synthase (324 aa).

The active-site Proton donor is the Lys135. Mg(2+) contacts are provided by Asp163, Glu192, and Asp215. Lys237 (proton acceptor) is an active-site residue.

The protein belongs to the mandelate racemase/muconate lactonizing enzyme family. MenC type 1 subfamily. The cofactor is a divalent metal cation.

The catalysed reaction is (1R,6R)-6-hydroxy-2-succinyl-cyclohexa-2,4-diene-1-carboxylate = 2-succinylbenzoate + H2O. It participates in quinol/quinone metabolism; 1,4-dihydroxy-2-naphthoate biosynthesis; 1,4-dihydroxy-2-naphthoate from chorismate: step 4/7. The protein operates within quinol/quinone metabolism; menaquinone biosynthesis. Converts 2-succinyl-6-hydroxy-2,4-cyclohexadiene-1-carboxylate (SHCHC) to 2-succinylbenzoate (OSB). In Aliivibrio fischeri (strain ATCC 700601 / ES114) (Vibrio fischeri), this protein is o-succinylbenzoate synthase.